We begin with the raw amino-acid sequence, 538 residues long: Phosphoenolpyruvate carboxykinase (ATP) (538 aa).

Residues arginine 64, tyrosine 205, and lysine 211 each contribute to the substrate site. ATP is bound by residues lysine 211, histidine 230, and 246 to 254; that span reads GLSGTGKTT. Lysine 211 and histidine 230 together coordinate Mn(2+). Residue aspartate 267 coordinates Mn(2+). Residues glutamate 295, arginine 331, 447–448, and threonine 453 each bind ATP; that span reads RI. Arginine 331 is a substrate binding site.

It belongs to the phosphoenolpyruvate carboxykinase (ATP) family. Monomer. Mn(2+) serves as cofactor.

It localises to the cytoplasm. It carries out the reaction oxaloacetate + ATP = phosphoenolpyruvate + ADP + CO2. The protein operates within carbohydrate biosynthesis; gluconeogenesis. In terms of biological role, involved in the gluconeogenesis. Catalyzes the conversion of oxaloacetate (OAA) to phosphoenolpyruvate (PEP) through direct phosphoryl transfer between the nucleoside triphosphate and OAA. This is Phosphoenolpyruvate carboxykinase (ATP) from Haemophilus influenzae (strain ATCC 51907 / DSM 11121 / KW20 / Rd).